Here is a 440-residue protein sequence, read N- to C-terminus: Glutamate-1-semialdehyde 2,1-aminomutase (440 aa).

The residue at position 271 (lysine 271) is an N6-(pyridoxal phosphate)lysine.

The protein belongs to the class-III pyridoxal-phosphate-dependent aminotransferase family. HemL subfamily. Homodimer. It depends on pyridoxal 5'-phosphate as a cofactor.

The protein localises to the cytoplasm. It carries out the reaction (S)-4-amino-5-oxopentanoate = 5-aminolevulinate. The protein operates within porphyrin-containing compound metabolism; protoporphyrin-IX biosynthesis; 5-aminolevulinate from L-glutamyl-tRNA(Glu): step 2/2. The chain is Glutamate-1-semialdehyde 2,1-aminomutase from Chlamydia pneumoniae (Chlamydophila pneumoniae).